The sequence spans 404 residues: WD repeat and SOCS box-containing protein 2 (404 aa).

WD repeat units follow at residues 105–148 (PPSR…LLLN), 151–191 (GHQD…KQIQ), 195–234 (GHLQWVYCCSISPDCSMLCSAAGEKSVFLWSMRSYTLIRK), 237–276 (GHQSSVVSCDFSPDSALLVTASYDTSVIMWDPYTGERLRS), and 291–330 (VHMSSLRSVCFSPEGLYLATVADDRLLRIWALELKAPVAF). Residues 356–404 (HVQFWTAPRVLSSLKHLCRKALRSFLTTYQVLALPIPKKMKEFLTYRTF) form the SOCS box domain.

The protein operates within protein modification; protein ubiquitination. Functionally, may be a substrate-recognition component of a SCF-like ECS (Elongin-Cullin-SOCS-box protein) E3 ubiquitin ligase complex which mediates the ubiquitination and subsequent proteasomal degradation of target proteins. The polypeptide is WD repeat and SOCS box-containing protein 2 (Wsb2) (Mus musculus (Mouse)).